Consider the following 744-residue polypeptide: MSRTLYDKVWDDHVIDRHLVHEVTSPQAFEGLRNASRRVRRPDCTLATVDHNIPTTTRKKFKSITTFIDEADSRTQCETLETNVKEFELTYFGMEDSRQGIVHVIGPEQGFTLPGTTVVCGDSHTSTHGAFGALAFGIGTSEVEHVLATQTLLQKKSKNMRVCVEGELTPGVTSKDVALHVIGLIGTAGGTRCVIEFCGSAIASLSMEARMSICNMSIEGGARAGMIAPDEITFEYLRGRPLAPEGAEWDKAVQYWKSLKSDPNAKYDIDVKIAASDIAPTITWGTSPQDVAPITANVPDPSSVSDPARKAAMERALEYIGLVPNTPLEEVKIDKAFIGSCTNSRIEDLRSAASIVKGKHIADWVYAMVVPGSGLVKRQAEREGLDKVFTDAGFDWREAGCSMCLGMNPDQLSPGERCASTSNRNFEGRQGAGGRTHLMSPAMAAAAAIRGYLTDVRKFSSTPMVPRSPPPKFQTIQPKVEDEAAHKQAADQADPVTDCPPAGSPVNKGAPVASAMPAFTTLKGVAAPLAISNVDTDMIIPKQFLKTIKRTGLGSALFYGLRYDPATGAEKPDFVLNQPAYRSSKILVCTGPNFGCGSSREHAPWAFNDFGIRCIIATSFADIFFNNCFKNGMLPIILSQEQVDTLAKYATQKAEIEVDLVHQKIRYPGGEIPFDXMIEEFRKHCLVNGLDDIGLTMQKDSAIEKFEAKRTSTWPWLDGKAYKGKATKVTAIGSASQPAKKLDW.

Residues C341, C401, and C404 each contribute to the [4Fe-4S] cluster site.

It belongs to the aconitase/IPM isomerase family. In terms of assembly, monomer. [4Fe-4S] cluster is required as a cofactor.

The catalysed reaction is (2R,3S)-3-isopropylmalate = (2S)-2-isopropylmalate. It participates in amino-acid biosynthesis; L-leucine biosynthesis; L-leucine from 3-methyl-2-oxobutanoate: step 2/4. Catalyzes the isomerization between 2-isopropylmalate and 3-isopropylmalate, via the formation of 2-isopropylmaleate. In Phycomyces blakesleeanus (strain ATCC 8743b / DSM 1359 / FGSC 10004 / NBRC 33097 / NRRL 1555), this protein is 3-isopropylmalate dehydratase (leu1).